The primary structure comprises 371 residues: DNA replication and repair protein RecF (371 aa).

30 to 37 contacts ATP; the sequence is GKNGQGKT.

The protein belongs to the RecF family.

It is found in the cytoplasm. The RecF protein is involved in DNA metabolism; it is required for DNA replication and normal SOS inducibility. RecF binds preferentially to single-stranded, linear DNA. It also seems to bind ATP. This chain is DNA replication and repair protein RecF, found in Clostridioides difficile (strain 630) (Peptoclostridium difficile).